Consider the following 371-residue polypeptide: Putative glutamate--cysteine ligase 2 (371 aa).

The protein belongs to the glutamate--cysteine ligase type 2 family. YbdK subfamily.

It carries out the reaction L-cysteine + L-glutamate + ATP = gamma-L-glutamyl-L-cysteine + ADP + phosphate + H(+). Its function is as follows. ATP-dependent carboxylate-amine ligase which exhibits weak glutamate--cysteine ligase activity. This is Putative glutamate--cysteine ligase 2 from Nitrosospira multiformis (strain ATCC 25196 / NCIMB 11849 / C 71).